Reading from the N-terminus, the 399-residue chain is 26S proteasome regulatory subunit S10B homolog B (399 aa).

180–187 provides a ligand contact to ATP; sequence GPPGTGKT. K203 participates in a covalent cross-link: Glycyl lysine isopeptide (Lys-Gly) (interchain with G-Cter in ubiquitin).

The protein belongs to the AAA ATPase family. Component of the 19S regulatory particle (RP/PA700) base subcomplex of the 26S proteasome. The 26S proteasome is composed of a core protease (CP), known as the 20S proteasome, capped at one or both ends by the 19S regulatory particle (RP/PA700). The RP/PA700 complex is composed of at least 17 different subunits in two subcomplexes, the base and the lid, which form the portions proximal and distal to the 20S proteolytic core, respectively.

The protein localises to the cytoplasm. The protein resides in the nucleus. In terms of biological role, the 26S proteasome is involved in the ATP-dependent degradation of ubiquitinated proteins. The regulatory (or ATPase) complex confers ATP dependency and substrate specificity to the 26S complex. This is 26S proteasome regulatory subunit S10B homolog B (RPT4B) from Arabidopsis thaliana (Mouse-ear cress).